We begin with the raw amino-acid sequence, 107 residues long: UPF0145 protein ECA2666 (107 aa).

It belongs to the UPF0145 family.

The sequence is that of UPF0145 protein ECA2666 from Pectobacterium atrosepticum (strain SCRI 1043 / ATCC BAA-672) (Erwinia carotovora subsp. atroseptica).